Reading from the N-terminus, the 516-residue chain is Probable malate:quinone oxidoreductase (516 aa).

This sequence belongs to the MQO family. The cofactor is FAD.

The enzyme catalyses (S)-malate + a quinone = a quinol + oxaloacetate. Its pathway is carbohydrate metabolism; tricarboxylic acid cycle; oxaloacetate from (S)-malate (quinone route): step 1/1. The polypeptide is Probable malate:quinone oxidoreductase (Mycobacterium sp. (strain MCS)).